Reading from the N-terminus, the 230-residue chain is Inactive L-threonine 3-dehydrogenase, mitochondrial (230 aa).

The protein belongs to the NAD(P)-dependent epimerase/dehydratase family. In terms of tissue distribution, expressed in all tissues examined. Detected in most cell types examined, but not observed in endothelial cells, glioma cell lines and some leukemia cell lines.

It is found in the mitochondrion. The sequence is that of Inactive L-threonine 3-dehydrogenase, mitochondrial from Homo sapiens (Human).